The primary structure comprises 991 residues: Phosphate metabolism protein 7 (991 aa).

The Extracellular segment spans residues 1 to 9; the sequence is MADSSSTSA. Residues 10–30 form a helical membrane-spanning segment; sequence FISTLIIYGLTAVVFVWLFLL. Residues 31–91 lie on the Cytoplasmic side of the membrane; sequence LRPKNRRVYE…TSVDGYFLLR (61 aa). A helical transmembrane segment spans residues 92-112; it reads YIGIVGSLSFVGCLLLLPILL. The Extracellular portion of the chain corresponds to 113–138; that stretch reads PVNATNGNNLQGFELLSFSNVTNKNR. N-linked (GlcNAc...) asparagine glycosylation is found at N115 and N132. The chain crosses the membrane as a helical span at residues 139 to 159; the sequence is FYAHVFLSWIFFGLFTYVIYK. The Cytoplasmic segment spans residues 160–388; it reads ELYYYVVFRH…ERHSRRAVAN (229 aa). Residues 389–409 traverse the membrane as a helical segment; sequence TIMVLLIIFWAFPVAVVGIIS. The Extracellular segment spans residues 410 to 437; the sequence is NVNFLTDKVPFLRFINNMPTFLMGVITG. A helical membrane pass occupies residues 438 to 458; the sequence is LLPTIALVVLMSLVPPFIVML. At 459–471 the chain is on the cytoplasmic side; that stretch reads GKLSGCVTRQETD. A helical membrane pass occupies residues 472–492; sequence LYSQAWYYAFAVIQIFLVVTA. The Extracellular portion of the chain corresponds to 493 to 523; the sequence is TSSASSTVDSIIDRPRSAMTLLANNLPKASN. Residues 524-544 form a helical membrane-spanning segment; sequence FYIMYFILKGLTGPTWTILQA. At 545–582 the chain is on the cytoplasmic side; that stretch reads VNLLLSKVLGRVLDSTPRQKWNRYNTLATPRMGIVYPG. Residues 583 to 603 form a helical membrane-spanning segment; the sequence is IEILVCIYICYSIIAPILLFF. A topological domain (extracellular) is located at residue S604. Residues 605 to 625 form a helical membrane-spanning segment; sequence TVMLTLLYVAYLYNLNYVFGF. Residues 626 to 637 lie on the Cytoplasmic side of the membrane; it reads SFDLKGRNYPRA. A helical membrane pass occupies residues 638 to 658; it reads LFQIFVGIYLSEVCLLGLFIM. Residues 659-661 are Extracellular-facing; it reads AKT. The helical transmembrane segment at 662–682 threads the bilayer; the sequence is WGPLVLEVFWIVVTALAHIYM. The Cytoplasmic segment spans residues 683 to 991; that stretch reads KRKFIPLFDA…PPDYEPEAKK (309 aa). The segment at 749–787 is disordered; the sequence is KANLIPDNDGSSENGTPSNPFESGSERASLSGSNAESDS. Over residues 757-785 the composition is skewed to polar residues; the sequence is DGSSENGTPSNPFESGSERASLSGSNAES.

This sequence belongs to the CSC1 (TC 1.A.17) family.

Its subcellular location is the cell membrane. Functionally, acts as an osmosensitive calcium-permeable cation channel. This chain is Phosphate metabolism protein 7 (PHM7), found in Saccharomyces cerevisiae (strain ATCC 204508 / S288c) (Baker's yeast).